Consider the following 524-residue polypeptide: MSDILPLDVIGRRVEVNGEYATVRFCGAVPPVAGLWLGVEWDNPERGKHDGSHEGTMYFKCRHPTGGSFVRPSKVNFGDDFLTALKKRYVLEDGPDDDENSCSLKVGSKQVQTIGFEHITKKQSQLRALQDISLWNCAVSHAGEQGRIAEACPNIRVVNLSKNLLSTWDEVVLIAEQLKDLEALDLSENKLQFPSDSPTLTRTFSTLKTLVLNKTGITWTEVLHCAPSWPVLEELYLKSNNISISERPVNVLQKMRLLDLSSNPSIDESQLSLIADLPRLEHLVLSDIGLSSIHFPDAEIGCKTSMFPALKYLIVNDNQISEWSFINELDKLQSLQALSCTRNPLSKADKAEEIIIAKIAQLRTLNRCQILPEERRGAELDYRKAFGNEWRKAGGHPDPDKNRPNAAFLSAHPRYQLLCCKYGAPEDEELKTQQPFMLKKQLLTLKIKCSNQPERQILEKQLPDSMTVQKVKGLLSRLLKVPVSELLLSYESSKMPGREIELENDLQPLQFYSVENGDCLLVRW.

S2 bears the N-acetylserine mark. A CAP-Gly domain is found at 27–71; it reads GAVPPVAGLWLGVEWDNPERGKHDGSHEGTMYFKCRHPTGGSFVR. LRR repeat units lie at residues 154–175, 180–201, 206–227, 231–253, 254–275, 279–300, and 309–330; these read NIRV…VLIA, DLEA…PTLT, TLKT…HCAP, VLEE…NVLQ, KMRL…SLIA, RLEH…DAEI, and ALKY…NELD. An LRRCT domain is found at 343-381; sequence NPLSKADKAEEIIIAKIAQLRTLNRCQILPEERRGAELD. K460 carries the N6-acetyllysine modification. Residue S492 is modified to Phosphoserine.

Belongs to the TBCE family. Supercomplex made of cofactors A to E. Cofactors A and D function by capturing and stabilizing tubulin in a quasi-native conformation. Cofactor E binds to the cofactor D-tubulin complex; interaction with cofactor C then causes the release of tubulin polypeptides that are committed to the native state. Cofactors B and E can form a heterodimer which binds to alpha-tubulin and enhances their ability to dissociate tubulin heterodimers. Interacts with TBCD. As to expression, ubiquitously expressed.

Its subcellular location is the cytoplasm. It localises to the cytoskeleton. In terms of biological role, tubulin-folding protein; involved in the second step of the tubulin folding pathway and in the regulation of tubulin heterodimer dissociation. Required for correct organization of microtubule cytoskeleton and mitotic splindle, and maintenance of the neuronal microtubule network. This is Tubulin-specific chaperone E (Tbce) from Mus musculus (Mouse).